Consider the following 607-residue polypeptide: MLHSPHKQPQNHKCGANFLQEDCKKALAFKWLISAGHYQPPRPTESVSALTTVHAGIFKAASSIYNRGHKFYLEKKGGTMASNSLFSAVTPCQQSFFWDPSTSRRFSPPSSSLQPGKMSDVSPVVAAQQQQQQQQQQQQQQQQQQQQQQQQQQQQQEAAAAAAAAAAAAAAAAAAVPRLRPPHDNRTMVEIIADHPAELVRTDSPNFLCSVLPSHWRCNKTLPVAFKVVALGEVPDGTVVTVMAGNDENYSAELRNASAVMKNQVARFNDLRFVGRSGRGKSFTLTITVFTNPPQVATYHRAIKVTVDGPREPRRHRQKLDDSKPSLFSDRLSDLGRIPHPSMRVGVPPQNPRPSLNSAPSPFNPQGQSQITDPRQAQSSPPWSYDQSYPSYLSQMTSPSIHSTTPLSSTRGTGLPAITDVPRRISDDDTATSDFCLWPSSLSKKSQAGASELGPFSDPRQFPSISSLTESRFSNPRMHYPATFTYTPPVTSGMSLGMSATTHYHTYLPPPYPGSSQSQSGPFQTSSTPYLYYGTSSASYQFPMVPGGDRSPSRMVPPCTTTSNGSTLLNPNLPNQNDGVDADGSHSSSPTVLNSSGRMDESVWRPY.

Positions 1–88 (MLHSPHKQPQ…TMASNSLFSA (88 aa)) are interaction with IFI204. Over residues 100-112 (PSTSRRFSPPSSS) the composition is skewed to low complexity. Residues 100–126 (PSTSRRFSPPSSSLQPGKMSDVSPVVA) are disordered. Positions 187–315 (TMVEIIADHP…TVDGPREPRR (129 aa)) constitute a Runt domain. The segment at 242 to 258 (VMAGNDENYSAELRNAS) is required for interaction with FOXO1. The interval 307-430 (VDGPREPRRH…VPRRISDDDT (124 aa)) is disordered. A Glycyl lysine isopeptide (Lys-Gly) (interchain with G-Cter in SUMO2) cross-link involves residue Lys-324. Arg-353 is modified (asymmetric dimethylarginine). Polar residues predominate over residues 353-412 (RPSLNSAPSPFNPQGQSQITDPRQAQSSPPWSYDQSYPSYLSQMTSPSIHSTTPLSSTRG). The segment at 422–525 (PRRISDDDTA…SQSQSGPFQT (104 aa)) is interaction with KAT6A. The interval 460–554 (RQFPSISSLT…VPGGDRSPSR (95 aa)) is interaction with KAT6B. The residue at position 537 (Ser-537) is a Phosphoserine; by CDK1. Residues 548 to 607 (GDRSPSRMVPPCTTTSNGSTLLNPNLPNQNDGVDADGSHSSSPTVLNSSGRMDESVWRPY) form a disordered region. 2 stretches are compositionally biased toward polar residues: residues 559 to 578 (CTTT…NQND) and 585 to 597 (SHSS…NSSG). Residues 598–607 (RMDESVWRPY) are compositionally biased toward basic and acidic residues.

Heterodimer of an alpha and a beta subunit. The alpha subunit binds DNA as a monomer and through the Runt domain. DNA-binding is increased by heterodimerization. Interacts with XRCC6 (Ku70) and XRCC5 (Ku80). Interacts with CCNB1, KAT6A and KAT6B. Interacts with HIVEP3. Interacts with IFI204. Interaction with SATB2; the interaction results in enhanced DNA binding and transactivation by these transcription factors. Binds to HIPK3. Interacts with FOXO1 (via a C-terminal region); the interaction inhibits RUNX2 transcriptional activity towards BGLAP. Interacts with FOXP3. Interacts with TMEM119. Interacts with OLFM2. Interacts with IPO7; the interaction inhibits RUNX2 nuclear translocation in osteoblasts. As to quaternary structure, interacts with DDX5. In terms of processing, phosphorylated; probably by MAP kinases (MAPK). Phosphorylation by HIPK3 is required for the SPEN/MINT and FGF2 transactivation during osteoblastic differentiation. Phosphorylation at Ser-537 by CDK1 promotes endothelial cell proliferation required for tumor angiogenesis probably by facilitating cell cycle progression. As to expression, found in thymus and testis, T-cell lines but not in B-cell lines. Isoform 2 is exclusively found in bone, particularly in osteoblasts; isoforms 3 and 4 are expressed in T-cell lines; isoforms 5, 6, 7, 8 and 9 can be found in osteoblasts and osteosarcoma cell lines.

The protein resides in the nucleus. It localises to the cytoplasm. Transcription factor involved in osteoblastic differentiation and skeletal morphogenesis. Essential for the maturation of osteoblasts and both intramembranous and endochondral ossification. CBF binds to the core site, 5'-PYGPYGGT-3', of a number of enhancers and promoters, including murine leukemia virus, polyomavirus enhancer, T-cell receptor enhancers, osteocalcin, osteopontin, bone sialoprotein, alpha 1(I) collagen, LCK, IL-3 and GM-CSF promoters. Inhibits KAT6B-dependent transcriptional activation. In osteoblasts, supports transcription activation: synergizes with SPEN/MINT to enhance FGFR2-mediated activation of the osteocalcin FGF-responsive element (OCFRE). This chain is Runt-related transcription factor 2 (Runx2), found in Mus musculus (Mouse).